The sequence spans 239 residues: Ribonuclease PH (239 aa).

Residues R86 and 124–126 (GTR) each bind phosphate.

It belongs to the RNase PH family. As to quaternary structure, homohexameric ring arranged as a trimer of dimers.

The enzyme catalyses tRNA(n+1) + phosphate = tRNA(n) + a ribonucleoside 5'-diphosphate. Functionally, phosphorolytic 3'-5' exoribonuclease that plays an important role in tRNA 3'-end maturation. Removes nucleotide residues following the 3'-CCA terminus of tRNAs; can also add nucleotides to the ends of RNA molecules by using nucleoside diphosphates as substrates, but this may not be physiologically important. Probably plays a role in initiation of 16S rRNA degradation (leading to ribosome degradation) during starvation. The protein is Ribonuclease PH of Sodalis glossinidius (strain morsitans).